The sequence spans 167 residues: Protein-export protein SecB (167 aa).

Belongs to the SecB family. In terms of assembly, homotetramer, a dimer of dimers. One homotetramer interacts with 1 SecA dimer.

It localises to the cytoplasm. One of the proteins required for the normal export of preproteins out of the cell cytoplasm. It is a molecular chaperone that binds to a subset of precursor proteins, maintaining them in a translocation-competent state. It also specifically binds to its receptor SecA. This is Protein-export protein SecB from Wolbachia sp. subsp. Brugia malayi (strain TRS).